The following is a 193-amino-acid chain: Large ribosomal subunit protein uL18 (193 aa).

This sequence belongs to the universal ribosomal protein uL18 family. In terms of assembly, part of the 50S ribosomal subunit. Contacts the 5S and 23S rRNAs.

Its function is as follows. This is one of the proteins that bind and probably mediate the attachment of the 5S RNA into the large ribosomal subunit, where it forms part of the central protuberance. This Methanococcus maripaludis (strain C6 / ATCC BAA-1332) protein is Large ribosomal subunit protein uL18.